Reading from the N-terminus, the 186-residue chain is Ribosome-recycling factor (186 aa).

This sequence belongs to the RRF family.

The protein localises to the cytoplasm. Its function is as follows. Responsible for the release of ribosomes from messenger RNA at the termination of protein biosynthesis. May increase the efficiency of translation by recycling ribosomes from one round of translation to another. This chain is Ribosome-recycling factor, found in Bordetella avium (strain 197N).